The sequence spans 452 residues: Glycylpeptide N-tetradecanoyltransferase (452 aa).

Tetradecanoyl-CoA contacts are provided by residues 38 to 41, 171 to 173, and 179 to 183; these read YKFW, LCI, and SKRLA. Leu452 (proton acceptor; via carboxylate) is an active-site residue.

It belongs to the NMT family. As to quaternary structure, monomer.

The protein localises to the cytoplasm. It catalyses the reaction N-terminal glycyl-[protein] + tetradecanoyl-CoA = N-tetradecanoylglycyl-[protein] + CoA + H(+). Adds a myristoyl group to the N-terminal glycine residue of certain cellular proteins. This Eremothecium gossypii (strain ATCC 10895 / CBS 109.51 / FGSC 9923 / NRRL Y-1056) (Yeast) protein is Glycylpeptide N-tetradecanoyltransferase (NMT1).